Consider the following 180-residue polypeptide: Nucleoside-triphosphatase THEP1 (180 aa).

ATP contacts are provided by residues 8–15 (GPVGSIKA) and 100–107 (VIIIDELG).

This sequence belongs to the THEP1 NTPase family.

It catalyses the reaction a ribonucleoside 5'-triphosphate + H2O = a ribonucleoside 5'-diphosphate + phosphate + H(+). Has nucleotide phosphatase activity towards ATP, GTP, CTP, TTP and UTP. May hydrolyze nucleoside diphosphates with lower efficiency. This Picrophilus torridus (strain ATCC 700027 / DSM 9790 / JCM 10055 / NBRC 100828 / KAW 2/3) protein is Nucleoside-triphosphatase THEP1.